The following is a 174-amino-acid chain: Myosin regulatory light chain sqh (174 aa).

Thr21 carries the phosphothreonine modification. Ser22 is subject to Phosphoserine. EF-hand domains follow at residues Ala31 to Asn66 and Asp100 to Arg135. Ca(2+)-binding residues include Asp44, Asn46, Asp48, and Asp55.

As to quaternary structure, myosin is a hexamer of 2 heavy chains and 4 light chains. In terms of processing, phosphorylation plays a central role in myosin regulation.

In terms of biological role, required for cytokinesis, could regulate contractile ring function. This Drosophila melanogaster (Fruit fly) protein is Myosin regulatory light chain sqh (sqh).